A 555-amino-acid polypeptide reads, in one-letter code: Glucose-6-phosphate isomerase (555 aa).

The active-site Proton donor is Glu353. Residues His384 and Lys516 contribute to the active site.

The protein belongs to the GPI family.

The protein localises to the cytoplasm. It carries out the reaction alpha-D-glucose 6-phosphate = beta-D-fructose 6-phosphate. Its pathway is carbohydrate biosynthesis; gluconeogenesis. It functions in the pathway carbohydrate degradation; glycolysis; D-glyceraldehyde 3-phosphate and glycerone phosphate from D-glucose: step 2/4. Functionally, catalyzes the reversible isomerization of glucose-6-phosphate to fructose-6-phosphate. This is Glucose-6-phosphate isomerase from Methylobacillus flagellatus (strain ATCC 51484 / DSM 6875 / VKM B-1610 / KT).